The following is a 264-amino-acid chain: Probable metallo-hydrolase YflN (264 aa).

Zn(2+) contacts are provided by His-80, His-82, Asp-84, His-85, His-169, Asp-188, and His-241.

This sequence belongs to the metallo-beta-lactamase superfamily. Zn(2+) serves as cofactor.

In Bacillus subtilis (strain 168), this protein is Probable metallo-hydrolase YflN (yflN).